The chain runs to 134 residues: Transcription antitermination protein NusB (134 aa).

Belongs to the NusB family.

Its function is as follows. Involved in transcription antitermination. Required for transcription of ribosomal RNA (rRNA) genes. Binds specifically to the boxA antiterminator sequence of the ribosomal RNA (rrn) operons. The polypeptide is Transcription antitermination protein NusB (Syntrophomonas wolfei subsp. wolfei (strain DSM 2245B / Goettingen)).